We begin with the raw amino-acid sequence, 296 residues long: Cell division protein DivIB (296 aa).

Over 1–25 (MMEDKIIHTPRFDEQRRMRRKKRQR) the chain is Cytoplasmic. A helical transmembrane segment spans residues 26 to 46 (LQLFIFLSIVAIVSLILIYMF). Residues 47–296 (TSISYVKKIS…KELNQVKKNS (250 aa)) lie on the Extracellular side of the membrane. Positions 50 to 118 (SYVKKISVND…NTVSINVEEY (69 aa)) constitute a POTRA domain.

It belongs to the FtsQ/DivIB family. DivIB subfamily.

The protein resides in the cell membrane. In terms of biological role, cell division protein that may be involved in stabilizing or promoting the assembly of the division complex. This chain is Cell division protein DivIB, found in Macrococcus caseolyticus (strain JCSC5402) (Macrococcoides caseolyticum).